We begin with the raw amino-acid sequence, 215 residues long: Peptidyl-tRNA hydrolase (215 aa).

Position 35 (Y35) interacts with tRNA. H40 functions as the Proton acceptor in the catalytic mechanism. 3 residues coordinate tRNA: Y86, N88, and N134.

This sequence belongs to the PTH family. As to quaternary structure, monomer.

It is found in the cytoplasm. The catalysed reaction is an N-acyl-L-alpha-aminoacyl-tRNA + H2O = an N-acyl-L-amino acid + a tRNA + H(+). Hydrolyzes ribosome-free peptidyl-tRNAs (with 1 or more amino acids incorporated), which drop off the ribosome during protein synthesis, or as a result of ribosome stalling. Functionally, catalyzes the release of premature peptidyl moieties from peptidyl-tRNA molecules trapped in stalled 50S ribosomal subunits, and thus maintains levels of free tRNAs and 50S ribosomes. The polypeptide is Peptidyl-tRNA hydrolase (Bordetella parapertussis (strain 12822 / ATCC BAA-587 / NCTC 13253)).